Consider the following 411-residue polypeptide: uncharacterized protein (411 aa).

The signal sequence occupies residues 1–21 (MHSRILLLLLMFAFNVGLINC). Residues 28–67 (PQSNCKIRCENGGMCVFDLERPDFHSCICLLGVYTGDRCQ) enclose the EGF-like domain. 3 cysteine pairs are disulfide-bonded: C32-C42, C36-C54, and C56-C66. The segment covering 78-97 (TATSDETSHPMNIQHQQSQA) has biased composition (polar residues). Disordered stretches follow at residues 78–312 (TATS…EPIR) and 337–375 (HPIE…EYGM). The span at 100–230 (DDARRRDDER…VEKELNDKRT (131 aa)) shows a compositional bias: basic and acidic residues. Acidic residues predominate over residues 237–266 (FEYEGGDEEYPQVAEKEDEYDEGYETDNTE). Residues 267–276 (DVTITTTKTT) are compositionally biased toward low complexity.

This is an uncharacterized protein from Caenorhabditis elegans.